Here is an 89-residue protein sequence, read N- to C-terminus: Small ribosomal subunit protein uS15 (89 aa).

The protein belongs to the universal ribosomal protein uS15 family. As to quaternary structure, part of the 30S ribosomal subunit. Forms a bridge to the 50S subunit in the 70S ribosome, contacting the 23S rRNA.

One of the primary rRNA binding proteins, it binds directly to 16S rRNA where it helps nucleate assembly of the platform of the 30S subunit by binding and bridging several RNA helices of the 16S rRNA. Its function is as follows. Forms an intersubunit bridge (bridge B4) with the 23S rRNA of the 50S subunit in the ribosome. The sequence is that of Small ribosomal subunit protein uS15 from Solibacter usitatus (strain Ellin6076).